The primary structure comprises 330 residues: Succinylglutamate desuccinylase (330 aa).

Residues His-53, Glu-56, and His-147 each contribute to the Zn(2+) site. Residue Glu-210 is part of the active site.

The protein belongs to the AspA/AstE family. Succinylglutamate desuccinylase subfamily. It depends on Zn(2+) as a cofactor.

The catalysed reaction is N-succinyl-L-glutamate + H2O = L-glutamate + succinate. It functions in the pathway amino-acid degradation; L-arginine degradation via AST pathway; L-glutamate and succinate from L-arginine: step 5/5. Transforms N(2)-succinylglutamate into succinate and glutamate. In Yersinia pseudotuberculosis serotype O:1b (strain IP 31758), this protein is Succinylglutamate desuccinylase.